Here is a 374-residue protein sequence, read N- to C-terminus: Carbamoyl phosphate synthase small chain (374 aa).

The interval 1–185 (MKAILALEDG…DVSSGYKWSD (185 aa)) is CPSase. 3 residues coordinate L-glutamine: S45, G237, and G239. Residues 189 to 374 (RLVLVDYGVK…RNLVKDATGK (186 aa)) form the Glutamine amidotransferase type-1 domain. The active-site Nucleophile is the C264. Positions 265, 268, 306, 308, and 309 each coordinate L-glutamine. Active-site residues include H347 and E349.

It belongs to the CarA family. As to quaternary structure, composed of two chains; the small (or glutamine) chain promotes the hydrolysis of glutamine to ammonia, which is used by the large (or ammonia) chain to synthesize carbamoyl phosphate. Tetramer of heterodimers (alpha,beta)4.

The enzyme catalyses hydrogencarbonate + L-glutamine + 2 ATP + H2O = carbamoyl phosphate + L-glutamate + 2 ADP + phosphate + 2 H(+). The catalysed reaction is L-glutamine + H2O = L-glutamate + NH4(+). It functions in the pathway amino-acid biosynthesis; L-arginine biosynthesis; carbamoyl phosphate from bicarbonate: step 1/1. It participates in pyrimidine metabolism; UMP biosynthesis via de novo pathway; (S)-dihydroorotate from bicarbonate: step 1/3. In terms of biological role, small subunit of the glutamine-dependent carbamoyl phosphate synthetase (CPSase). CPSase catalyzes the formation of carbamoyl phosphate from the ammonia moiety of glutamine, carbonate, and phosphate donated by ATP, constituting the first step of 2 biosynthetic pathways, one leading to arginine and/or urea and the other to pyrimidine nucleotides. The small subunit (glutamine amidotransferase) binds and cleaves glutamine to supply the large subunit with the substrate ammonia. This chain is Carbamoyl phosphate synthase small chain, found in Maridesulfovibrio salexigens (strain ATCC 14822 / DSM 2638 / NCIMB 8403 / VKM B-1763) (Desulfovibrio salexigens).